A 140-amino-acid chain; its full sequence is Large ribosomal subunit protein bL17 (140 aa).

This sequence belongs to the bacterial ribosomal protein bL17 family. In terms of assembly, part of the 50S ribosomal subunit. Contacts protein L32.

This Methylobacterium nodulans (strain LMG 21967 / CNCM I-2342 / ORS 2060) protein is Large ribosomal subunit protein bL17.